A 610-amino-acid chain; its full sequence is Probable indole-3-acetic acid-amido synthetase GH3.1 (610 aa).

This sequence belongs to the IAA-amido conjugating enzyme family. In terms of tissue distribution, expressed in flowers.

Functionally, may catalyze the synthesis of indole-3-acetic acid (IAA)-amino acid conjugates, providing a mechanism for the plant to cope with the presence of excess auxin. In Oryza sativa subsp. japonica (Rice), this protein is Probable indole-3-acetic acid-amido synthetase GH3.1 (GH3.1).